The sequence spans 143 residues: Large ribosomal subunit protein uL11 (143 aa).

Belongs to the universal ribosomal protein uL11 family. In terms of assembly, part of the ribosomal stalk of the 50S ribosomal subunit. Interacts with L10 and the large rRNA to form the base of the stalk. L10 forms an elongated spine to which L12 dimers bind in a sequential fashion forming a multimeric L10(L12)X complex. One or more lysine residues are methylated.

Its function is as follows. Forms part of the ribosomal stalk which helps the ribosome interact with GTP-bound translation factors. This Bifidobacterium longum (strain DJO10A) protein is Large ribosomal subunit protein uL11.